The primary structure comprises 289 residues: MLTPYAYHLVNVFAETYFGGNPLAVFPQADGLTDQQMQLIARQFNLSETVFVHQTTESSAVRKLRIFTPDYELPFAGHPTIGAAFVLHQQLNLPETYLLQTQAGLVKLFHEAKQICFGLQNHIDVEVIDDNLPQYTQLLGLSESDIAQIAWINTGSRQLLIQLTSLNALKTCQIHPALFQQIVKQSALYLWFVEQNQANVRLFFGSNGAVVEDPGTGSAAANLGGLCLKNGLTPLNWRIYQGDEIQRPNRLTLQVDESETIYVGGKVIAVGCGELFVPSGEGEPSQGCR.

The active site involves Glu-48.

Belongs to the PhzF family.

This is an uncharacterized protein from Pasteurella multocida (strain Pm70).